Reading from the N-terminus, the 177-residue chain is Ribosome maturation factor RimM (177 aa).

The PRC barrel domain occupies 92-166 (EDTFYHADLM…RIVVVPDTNP (75 aa)).

This sequence belongs to the RimM family. In terms of assembly, binds ribosomal protein uS19.

It is found in the cytoplasm. Its function is as follows. An accessory protein needed during the final step in the assembly of 30S ribosomal subunit, possibly for assembly of the head region. Essential for efficient processing of 16S rRNA. May be needed both before and after RbfA during the maturation of 16S rRNA. It has affinity for free ribosomal 30S subunits but not for 70S ribosomes. The protein is Ribosome maturation factor RimM of Azorhizobium caulinodans (strain ATCC 43989 / DSM 5975 / JCM 20966 / LMG 6465 / NBRC 14845 / NCIMB 13405 / ORS 571).